A 652-amino-acid polypeptide reads, in one-letter code: DNA ligase (652 aa).

NAD(+) is bound by residues 29–33 (DSEYD), 78–79 (SL), and glutamate 107. Residue lysine 109 is the N6-AMP-lysine intermediate of the active site. NAD(+) contacts are provided by arginine 130, glutamate 164, lysine 278, and lysine 302. Zn(2+) contacts are provided by cysteine 395, cysteine 398, cysteine 413, and cysteine 418. One can recognise a BRCT domain in the interval 577 to 652 (AADAALSGMT…IRDEDWLDSL (76 aa)).

The protein belongs to the NAD-dependent DNA ligase family. LigA subfamily. It depends on Mg(2+) as a cofactor. Mn(2+) serves as cofactor.

It catalyses the reaction NAD(+) + (deoxyribonucleotide)n-3'-hydroxyl + 5'-phospho-(deoxyribonucleotide)m = (deoxyribonucleotide)n+m + AMP + beta-nicotinamide D-nucleotide.. In terms of biological role, DNA ligase that catalyzes the formation of phosphodiester linkages between 5'-phosphoryl and 3'-hydroxyl groups in double-stranded DNA using NAD as a coenzyme and as the energy source for the reaction. It is essential for DNA replication and repair of damaged DNA. This chain is DNA ligase, found in Streptococcus sanguinis (strain SK36).